The primary structure comprises 33 residues: Brevinin-2 (33 aa).

C27 and C33 are disulfide-bonded.

Belongs to the frog skin active peptide (FSAP) family. Brevinin subfamily. As to expression, expressed by the skin glands.

The protein resides in the secreted. In terms of biological role, shows antibacterial activity against representative Gram-negative and Gram-positive bacterial species, and a very high hemolytic activity. This is Brevinin-2 from Pelophylax porosus brevipodus (Nagoya Daruma pond frog).